The sequence spans 416 residues: Enterobactin exporter EntS (416 aa).

Residues 1–21 (MNKQSWLLNLSLLKTHPAFRA) lie on the Cytoplasmic side of the membrane. The helical transmembrane segment at 22–42 (VFLARFISIVSLGLLGVAVPV) threads the bilayer. At 43–55 (QIQIMTHSTWQVG) the chain is on the periplasmic side. A helical transmembrane segment spans residues 56–76 (LSVTLTGGAMFVGLMVGGVLA). Topologically, residues 77–83 (DRYERKK) are cytoplasmic. Residues 84 to 104 (VILLARGTCGIGFIGLCLNAL) form a helical membrane-spanning segment. Topologically, residues 105–109 (LPEPS) are periplasmic. The helical transmembrane segment at 110-130 (LLAIYLLGLWDGFFASLGVTA) threads the bilayer. Over 131 to 156 (LLAATPALVGRENLMQAGAITMLTVR) the chain is Cytoplasmic. Residues 157 to 177 (LGSVISPMIGGLLLATGGVAW) form a helical membrane-spanning segment. Residue N178 is a topological domain, periplasmic. The chain crosses the membrane as a helical span at residues 179 to 199 (YGLAAAGTFITLLPLLSLPAL). The Cytoplasmic portion of the chain corresponds to 200–218 (PPPPQPREHPLKSLLAGFR). A helical membrane pass occupies residues 219 to 239 (FLLASPLVGGIALLGGLLTMA). Residues 240 to 256 (SAVRVLYPALADNWQMS) are Periplasmic-facing. A helical transmembrane segment spans residues 257–277 (AAQIGFLYAAIPLGAAIGALT). Residues 278–287 (SGKLAHSVRP) lie on the Cytoplasmic side of the membrane. Residues 288–307 (GLLMLLSTLGAFLAIGLFGL) form a helical membrane-spanning segment. Over 308 to 313 (MPMWIL) the chain is Periplasmic. A helical membrane pass occupies residues 314-336 (GVVCLALFGWLSAVSSLLQYTML). Residues 337–356 (QTQTPEAMLGRINGLWTAQN) lie on the Cytoplasmic side of the membrane. The chain crosses the membrane as a helical span at residues 357-377 (VTGDAIGAALLGGLGAMMTPV). Residue A378 is a topological domain, periplasmic. A helical membrane pass occupies residues 379–399 (SASASGFGLLIIGVLLLLVLV). The Cytoplasmic portion of the chain corresponds to 400–416 (ELRRFRQTPPQVTASDS).

Belongs to the major facilitator superfamily. EntS (TC 2.A.1.38) family.

The protein resides in the cell inner membrane. Functionally, component of an export pathway for enterobactin. In Escherichia coli O127:H6 (strain E2348/69 / EPEC), this protein is Enterobactin exporter EntS.